The sequence spans 252 residues: Probable anguibactin biosynthesis thioesterase AngT (252 aa).

Active-site residues include S92 and H229.

Belongs to the thioesterase family.

The protein operates within siderophore biosynthesis; anguibactin biosynthesis. Probable thioesterase. Involved in anguibactin production, but is not essential for virulence or iron transport gene expression. This Vibrio anguillarum (strain ATCC 68554 / 775) (Listonella anguillarum) protein is Probable anguibactin biosynthesis thioesterase AngT (angT).